Here is a 443-residue protein sequence, read N- to C-terminus: Dynein regulatory complex protein 9 (443 aa).

2 disordered regions span residues 1 to 40 (MEEDSQEDSNLPPKVWHSEMTVSVTGKPPSTVEEDGLPKE) and 415 to 443 (GFKMPKDKVDSKDSKGKGKGKDKRRGKKK). The IQ domain maps to 393–422 (ELKSVIKLQAWWRGTMIRREIGGFKMPKDK). Residues 415–430 (GFKMPKDKVDSKDSKG) show a composition bias toward basic and acidic residues. Basic residues predominate over residues 431 to 443 (KGKGKDKRRGKKK).

Belongs to the DRC9 family. Component of the nexin-dynein regulatory complex (N-DRC). Interacts (via IQ domain) with CALM when calcium levels are low. Does not interact with CALM in the presence of Ca(2+). Interacts with the HSP70 proteins HSPA1L and HSPA8. May form a complex with CAMK4 and HSP70.

It is found in the cytoplasm. Its subcellular location is the cell projection. The protein localises to the cilium. The protein resides in the flagellum. It localises to the cytoskeleton. It is found in the flagellum axoneme. Functionally, component of the nexin-dynein regulatory complex (N-DRC), a key regulator of ciliary/flagellar motility which maintains the alignment and integrity of the distal axoneme and regulates microtubule sliding in motile axonemes. Binds calmodulin when cellular Ca(2+) levels are low and thereby contributes to the regulation of calcium and calmodulin-dependent protein kinase IV (CAMK4) activity; contributes to the regulation of CAMK4 signaling cascades. Required for normal axoneme assembly in sperm flagella, normal sperm tail formation and for male fertility. This chain is Dynein regulatory complex protein 9 (IQCG), found in Macaca fascicularis (Crab-eating macaque).